We begin with the raw amino-acid sequence, 876 residues long: Alanine--tRNA ligase (876 aa).

Zn(2+) is bound by residues histidine 566, histidine 570, cysteine 667, and histidine 671.

The protein belongs to the class-II aminoacyl-tRNA synthetase family. Zn(2+) is required as a cofactor.

Its subcellular location is the cytoplasm. The catalysed reaction is tRNA(Ala) + L-alanine + ATP = L-alanyl-tRNA(Ala) + AMP + diphosphate. Its function is as follows. Catalyzes the attachment of alanine to tRNA(Ala) in a two-step reaction: alanine is first activated by ATP to form Ala-AMP and then transferred to the acceptor end of tRNA(Ala). Also edits incorrectly charged Ser-tRNA(Ala) and Gly-tRNA(Ala) via its editing domain. In Albidiferax ferrireducens (strain ATCC BAA-621 / DSM 15236 / T118) (Rhodoferax ferrireducens), this protein is Alanine--tRNA ligase.